We begin with the raw amino-acid sequence, 133 residues long: Secreted effector protein SteB (133 aa).

The protein localises to the secreted. It is found in the host cytoplasm. Functionally, effector proteins function to alter host cell physiology and promote bacterial survival in host tissues. This Salmonella typhimurium (strain 14028s / SGSC 2262) protein is Secreted effector protein SteB (steB).